The following is a 200-amino-acid chain: Pyridoxal 5'-phosphate synthase subunit PdxT (200 aa).

An L-glutamine-binding site is contributed by 52–54 (GES). Residue C84 is the Nucleophile of the active site. L-glutamine is bound by residues R116 and 145–146 (IR). Active-site charge relay system residues include H181 and E183.

Belongs to the glutaminase PdxT/SNO family. In the presence of PdxS, forms a dodecamer of heterodimers. Only shows activity in the heterodimer.

The enzyme catalyses aldehydo-D-ribose 5-phosphate + D-glyceraldehyde 3-phosphate + L-glutamine = pyridoxal 5'-phosphate + L-glutamate + phosphate + 3 H2O + H(+). The catalysed reaction is L-glutamine + H2O = L-glutamate + NH4(+). Its pathway is cofactor biosynthesis; pyridoxal 5'-phosphate biosynthesis. Its function is as follows. Catalyzes the hydrolysis of glutamine to glutamate and ammonia as part of the biosynthesis of pyridoxal 5'-phosphate. The resulting ammonia molecule is channeled to the active site of PdxS. The chain is Pyridoxal 5'-phosphate synthase subunit PdxT from Saccharolobus islandicus (strain Y.N.15.51 / Yellowstone #2) (Sulfolobus islandicus).